Here is a 313-residue protein sequence, read N- to C-terminus: MKLTDNVLRSFRVAKVFRENSDKINCFDFSPTGETVISSSDDDSIVLYDCQEGKPKRTLYSKKYGVDLIRYTHAANTVVYSSNKIDDTIRYLSLHDNKYIRYFPGHSKRVVALSMSPVDDTFISGSLDKTIRLWDLRSPNCQGLMHLQGKPVCSFDPEGLIFAAGVNSEMVKLYDLRSFDKGPFATFKMQYDRTCEWTALKFSNDGKLILMSTNGGFLRLVDAFKGAVMHTFGGYNNSKAVTLEATFTPDSQFIMIGSEDGKIHVWNCESGMKVAVLDGKHTGPITCLQFNPKFMTFTSACSNMAFWLPTIDD.

WD repeat units lie at residues 19–58 (ENSD…PKRT), 105–144 (GHSK…CQGL), 146–184 (HLQG…KGPF), 192–231 (DRTC…VMHT), 236–276 (NNSK…KVAV), and 280–313 (KHTG…TIDD).

Belongs to the WD repeat SWD2 family. Component of the SET1/COMPASS complex. Component of the PNUTS-PP1 phosphatase complex.

It localises to the nucleus. The protein resides in the chromosome. The protein localises to the cytoplasm. Its function is as follows. Regulatory component of the SET1/COMPASS complex implicated in the tethering of this complex to transcriptional start sites of active genes. Facilitates histone H3 'Lys-4' methylation (H3K4me) via recruitment of the SETD1A or SETD1B to the 'Ser-5' phosphorylated C-terminal domain (CTD) of RNA polymerase II large subunit (POLR2A). Component of the PNUTS-PP1 protein phosphatase complex, a protein phosphatase 1 (PP1) complex that promotes RNA polymerase II transcription pause-release, allowing transcription elongation. The chain is WD repeat-containing protein 82 (wdr82) from Xenopus tropicalis (Western clawed frog).